The primary structure comprises 221 residues: Interleukin-12 subunit alpha (221 aa).

The first 25 residues, 1-25, serve as a signal peptide directing secretion; that stretch reads MCPLRSLLLISTLVLLHHLPHLSLG. Intrachain disulfides connect Cys39–Cys112, Cys66–Cys198, and Cys87–Cys125. Asn95 is a glycosylation site (N-linked (GlcNAc...) asparagine).

The protein belongs to the IL-6 superfamily. As to quaternary structure, heterodimer with IL12B; disulfide-linked. This heterodimer is known as interleukin IL-12. Heterodimer with EBI3/IL27B; not disulfide-linked. This heterodimer is known as interleukin IL-35. Interacts with NBR1; this interaction promotes IL-12 secretion.

It localises to the secreted. In terms of biological role, heterodimerizes with IL12B to form the IL-12 cytokine or with EBI3/IL27B to form the IL-35 cytokine. IL-12 is primarily produced by professional antigen-presenting cells (APCs) such as B-cells and dendritic cells (DCs) as well as macrophages and granulocytes and regulates T-cell and natural killer-cell responses, induces the production of interferon-gamma (IFN-gamma), favors the differentiation of T-helper 1 (Th1) cells and is an important link between innate resistance and adaptive immunity. Mechanistically, exerts its biological effects through a receptor composed of IL12R1 and IL12R2 subunits. Binding to the receptor results in the rapid tyrosine phosphorylation of a number of cellular substrates including the JAK family kinases TYK2 and JAK2. In turn, recruited STAT4 gets phosphorylated and translocates to the nucleus where it regulates cytokine/growth factor responsive genes. As part of IL-35, plays essential roles in maintaining the immune homeostasis of the liver microenvironment and also functions as an immune-suppressive cytokine. Mediates biological events through unconventional receptors composed of IL12RB2 and gp130/IL6ST heterodimers or homodimers. Signaling requires the transcription factors STAT1 and STAT4, which form a unique heterodimer that binds to distinct DNA sites. In Capra hircus (Goat), this protein is Interleukin-12 subunit alpha (IL12A).